A 313-amino-acid polypeptide reads, in one-letter code: MAHSHSHTSSHLPEDNNARRLLYAFGVTAGFMLVEVVGGFLSGSLALLADAGHMLTDTAALLFALLAVQFSRRPPTIRHTFGWLRLTTLAAFVNAIALVVITILIVWEAIERFRTPRPVEGGMMMAIAVAGLLANILSFWLLHHGSEEKNLNVRAAALHVLGDLLGSVGAIIAALIIIWTGWTPADPILSILVSLLVLRSAWRLLKDSVNELLEGAPVSLDIAELKRRMCREIPEVRNVHHVHVWMVGEKPVMTLHVQVIPPHDHDALLDQIQHYLMDHYQIEHTTIQMEYQPCHRPDCHLNEGVSGHSHHHH.

At methionine 1–arginine 20 the chain is on the cytoplasmic side. Residues leucine 21–leucine 41 form a helical membrane-spanning segment. Residues serine 42–leucine 47 lie on the Periplasmic side of the membrane. A helical transmembrane segment spans residues leucine 48 to valine 68. At glutamine 69–leucine 89 the chain is on the cytoplasmic side. A helical membrane pass occupies residues alanine 90 to isoleucine 110. The Periplasmic segment spans residues glutamate 111–glycine 121. Residues glycine 122–leucine 142 traverse the membrane as a helical segment. Topologically, residues histidine 143–histidine 159 are cytoplasmic. The helical transmembrane segment at valine 160–threonine 180 threads the bilayer. Residue glycine 181 is a topological domain, periplasmic. Residues tryptophan 182–tryptophan 202 form a helical membrane-spanning segment. Residues arginine 203–histidine 313 are Cytoplasmic-facing.

It belongs to the cation diffusion facilitator (CDF) transporter (TC 2.A.4) family. SLC30A subfamily.

The protein localises to the cell inner membrane. Functionally, involved in zinc efflux across the cytoplasmic membrane, thus reducing zinc accumulation in the cytoplasm and rendering bacteria more resistant to zinc. It may contribute to zinc homeostasis at low concentrations of zinc. In Shigella flexneri, this protein is Zinc transporter ZitB (zitB).